The sequence spans 430 residues: Transcobalamin-2 (430 aa).

Positions 1–18 are cleaved as a signal peptide; the sequence is MELLKALLLLSGVFGALA. Cystine bridges form between cysteine 21/cysteine 270, cysteine 116/cysteine 312, and cysteine 165/cysteine 208. Residues 152–156, histidine 193, 193–197, asparagine 245, serine 248, glutamine 294, and 398–400 contribute to the cob(II)alamin site; these read TNYYQ, HVSVD, and WQL.

The protein belongs to the eukaryotic cobalamin transport proteins family. In terms of assembly, interacts with CD320 (via LDL-receptor class A domains).

The protein localises to the secreted. Functionally, primary vitamin B12-binding and transport protein. Delivers cobalamin to cells. The chain is Transcobalamin-2 (Tcn2) from Mus musculus (Mouse).